Here is a 708-residue protein sequence, read N- to C-terminus: Solute carrier family 15 member 1 (708 aa).

A helical membrane pass occupies residues 1-21; that stretch reads MGMSKSYGCFGYPLSIFFIVV. The Extracellular segment spans residues 22 to 53; sequence NEFCERFSYYGMRALLILYFRRFIGWDDNLST. The N-linked (GlcNAc...) asparagine glycan is linked to N50. Residues 54-74 traverse the membrane as a helical segment; the sequence is AIYHTFVALCYLTPILGALIA. Residues 75–82 lie on the Cytoplasmic side of the membrane; that stretch reads DSWLGKFK. Residues 83–103 form a helical membrane-spanning segment; it reads TIVSLSIVYTIGQAVTAVSSI. Residues 104–118 are Extracellular-facing; it reads NDLTDYNKDGTPDNL. N117 carries an N-linked (GlcNAc...) asparagine glycan. Residues 119–139 traverse the membrane as a helical segment; the sequence is SVHVALSMIGLALIALGTGGI. Residues 140–161 are Cytoplasmic-facing; sequence KPCVSAFGGDQFEEGQEKQRNR. Residues 162-182 traverse the membrane as a helical segment; the sequence is FFSIFYLAINAGSLISTIVTP. Topologically, residues 183–198 are extracellular; sequence MLRVHECGIYSQKACY. A helical transmembrane segment spans residues 199 to 219; that stretch reads PLAFGVPAALMAVSLIVFVIG. Residues 220–276 are Cytoplasmic-facing; that stretch reads SGMYKKFQPQGNVMGKVVKCIGFALKNRFRHRSKQFPKREHWLDWAKEKYDERLISQ. Residues 277–297 traverse the membrane as a helical segment; sequence IKMVTKVMFLYIPLPMFWALF. The Extracellular segment spans residues 298–327; that stretch reads DQQGSRWTLQATAMSGKIGLLEVQPDQMQT. Residues 328 to 348 traverse the membrane as a helical segment; sequence VNAILIVVMVPIMDAVVYPLI. At 349–361 the chain is on the cytoplasmic side; it reads AKCGFNFTSLKRM. Residues 362–382 form a helical membrane-spanning segment; sequence TVGMFLASMAFVMAAIVQLEI. Over 383–584 the chain is Extracellular; the sequence is DKTLPVFPKQ…ISPNTVNMAL (202 aa). Positions 383–585 are extracellular domain (ECD); that stretch reads DKTLPVFPKQ…SPNTVNMALQ (203 aa). Residues N408, N439, N495, N499, N509, N514, N527, and N539 are each glycosylated (N-linked (GlcNAc...) asparagine). Residues 585 to 605 form a helical membrane-spanning segment; it reads QIPQYFLITCGEVVFSVTGLE. At 606–619 the chain is on the cytoplasmic side; sequence FSYSQAPSNMKSVL. A helical transmembrane segment spans residues 620–640; the sequence is QAGWLLTVAVGNIIVLIVAGA. The Extracellular segment spans residues 641-645; sequence GQFSE. The helical transmembrane segment at 646 to 666 threads the bilayer; that stretch reads QWAEYILFAALLLVVCVIFAI. Residues 667 to 708 lie on the Cytoplasmic side of the membrane; it reads MARFYTYVNPAEIEAQFDDDEKKNLEKMNVYSTVTPVSQTQM.

This sequence belongs to the major facilitator superfamily. Proton-dependent oligopeptide transporter (POT/PTR) (TC 2.A.17) family. Interacts (via extracellular domain region) with trypsin.

The protein localises to the apical cell membrane. It carries out the reaction a dipeptide(out) + H(+)(out) = a dipeptide(in) + H(+)(in). The catalysed reaction is an L-amino acid tripeptide(out) + H(+)(out) = an L-amino acid tripeptide(in) + H(+)(in). The enzyme catalyses L-alanyl-L-lysine(out) + H(+)(out) = L-alanyl-L-lysine(in) + H(+)(in). It catalyses the reaction L-alanyl-L-proline(out) + H(+)(out) = L-alanyl-L-proline(in) + H(+)(in). It carries out the reaction L-alanyl-L-valine(out) + H(+)(out) = L-alanyl-L-valine(in) + H(+)(in). The catalysed reaction is carnosine(out) + H(+)(out) = carnosine(in) + H(+)(in). The enzyme catalyses glycyl-L-glutamine(out) + H(+)(out) = glycyl-L-glutamine(in) + H(+)(in). It catalyses the reaction glycyl-L-leucine(out) + H(+)(out) = glycyl-L-leucine(in) + H(+)(in). It carries out the reaction glycyl-L-proline(out) + H(+)(out) = glycyl-L-proline(in) + H(+)(in). The catalysed reaction is glycyl-sarcosine(out) + H(+)(out) = glycyl-sarcosine(in) + H(+)(in). The enzyme catalyses L-leucyl-L-leucine(out) + H(+)(out) = L-leucyl-L-leucine(in) + H(+)(in). It catalyses the reaction L-leucyl-L-proline(out) + H(+)(out) = L-leucyl-L-proline(in) + H(+)(in). It carries out the reaction L-phenylalanyl-L-leucine(out) + H(+)(out) = L-phenylalanyl-L-leucine(in) + H(+)(in). The catalysed reaction is L-phenylalanyl-L-phenylalanine(out) + H(+)(out) = L-phenylalanyl-L-phenylalanine(in) + H(+)(in). The enzyme catalyses L-lysyl-glycine(out) + H(+)(out) = L-lysyl-glycine(in) + H(+)(in). It catalyses the reaction L-tyrosylglycine(out) + H(+)(out) = L-tyrosylglycine(in) + H(+)(in). It carries out the reaction L-alanyl-L-aspartate(out) + 2 H(+)(out) = L-alanyl-L-aspartate(in) + 2 H(+)(in). The catalysed reaction is L-aspartyl-glycine(out) + 2 H(+)(out) = L-aspartyl-glycine(in) + 2 H(+)(in). The enzyme catalyses glycyl-L-aspartate(out) + 2 H(+)(out) = glycyl-L-aspartate(in) + 2 H(+)(in). It catalyses the reaction glycyl-L-glutamate(out) + 2 H(+)(out) = glycyl-L-glutamate(in) + 2 H(+)(in). It carries out the reaction L-alanyl-L-leucyl-L-alanine(out) + H(+)(out) = L-alanyl-L-leucyl-L-alanine(in) + H(+)(in). The catalysed reaction is L-alanyl-L-prolylglycine(out) + H(+)(out) = L-alanyl-L-prolylglycine(in) + H(+)(in). The enzyme catalyses glycylglycyl-L-isoleucine(out) + H(+)(out) = glycylglycyl-L-isoleucine(in) + H(+)(in). It catalyses the reaction glycylglycyl-L-proline(out) + H(+)(out) = glycylglycyl-L-proline(in) + H(+)(in). It carries out the reaction L-methionyl-L-phenylalanyl-L-methionine(out) + H(+)(out) = L-methionyl-L-phenylalanyl-L-methionine(in) + H(+)(in). The catalysed reaction is N-acetyl-D-muramoyl-L-alanyl-D-isoglutamine(out) + 2 H(+)(out) = N-acetyl-D-muramoyl-L-alanyl-D-isoglutamine(in) + 2 H(+)(in). The enzyme catalyses N(alpha)-formyl-L-methionyl-L-leucyl-L-phenylalanine(out) + 2 H(+)(out) = N(alpha)-formyl-L-methionyl-L-leucyl-L-phenylalanine(in) + 2 H(+)(in). Functionally, electrogenic proton-coupled amino-acid transporter that transports oligopeptides of 2 to 4 amino acids with a preference for dipeptides. Transports neutral and monovalently charged peptides with a proton to peptide stoichiometry of 1:1 or 2:1. Primarily responsible for the absorption of dietary di- and tripeptides from the small intestinal lumen. Mediates transepithelial transport of muramyl and N-formylated bacterial dipeptides contributing to recognition of pathogenic bacteria by the mucosal immune system. This is Solute carrier family 15 member 1 (SLC15A1) from Canis lupus familiaris (Dog).